The following is a 386-amino-acid chain: Phosphate acyltransferase (386 aa).

The disordered stretch occupies residues 359–386 (PHRARQDELGENKVVGADQSMTAKATGT). Over residues 377-386 (QSMTAKATGT) the composition is skewed to polar residues.

The protein belongs to the PlsX family. As to quaternary structure, homodimer. Probably interacts with PlsY.

It is found in the cytoplasm. The catalysed reaction is a fatty acyl-[ACP] + phosphate = an acyl phosphate + holo-[ACP]. It functions in the pathway lipid metabolism; phospholipid metabolism. In terms of biological role, catalyzes the reversible formation of acyl-phosphate (acyl-PO(4)) from acyl-[acyl-carrier-protein] (acyl-ACP). This enzyme utilizes acyl-ACP as fatty acyl donor, but not acyl-CoA. The sequence is that of Phosphate acyltransferase from Beijerinckia indica subsp. indica (strain ATCC 9039 / DSM 1715 / NCIMB 8712).